The following is a 359-amino-acid chain: Protein mab-21-like 2 (359 aa).

The protein belongs to the mab-21 family.

Its subcellular location is the nucleus. It is found in the cytoplasm. Functionally, required for several aspects of embryonic development including normal development of the eye. The protein is Protein mab-21-like 2 (mab21l2) of Xenopus tropicalis (Western clawed frog).